Reading from the N-terminus, the 2230-residue chain is DNA polymerase epsilon catalytic subunit A (2230 aa).

Positions 1-19 are enriched in polar residues; the sequence is MPTRQPSKYGNKFRSSSAS. Residues 1 to 24 form a disordered region; that stretch reads MPTRQPSKYGNKFRSSSASFKPKR. Zn(2+)-binding residues include Cys-2101, Cys-2104, Cys-2136, and Cys-2139. The CysA-type zinc finger occupies 2101-2139; the sequence is CNACCLIRDLDLCRDEDVLPEMGSDPNKAAPKPWRCPFC. [4Fe-4S] cluster-binding residues include Cys-2170, Cys-2173, Cys-2185, and Cys-2187. The short motif at 2170–2187 is the CysB motif element; that stretch reads CSKCGGLKISDFMEHCSC.

The protein belongs to the DNA polymerase type-B family. Heterotetramer. Consists of 4 subunits: pol2, dpb2, dpb3 and dpb4. [4Fe-4S] cluster serves as cofactor.

The protein resides in the nucleus. It carries out the reaction DNA(n) + a 2'-deoxyribonucleoside 5'-triphosphate = DNA(n+1) + diphosphate. Functionally, DNA polymerase II participates in chromosomal DNA replication. This chain is DNA polymerase epsilon catalytic subunit A (pol2), found in Aspergillus fumigatus (strain ATCC MYA-4609 / CBS 101355 / FGSC A1100 / Af293) (Neosartorya fumigata).